A 1081-amino-acid chain; its full sequence is Zinc finger protein 827 (1081 aa).

A compositionally biased stretch (basic and acidic residues) spans 1 to 10 (MPRRKQEQPK). Positions 1–14 (MPRRKQEQPKRLPS) are mediates direct interaction with RBBP4. Positions 1 to 77 (MPRRKQEQPK…DTSLGSTTPS (77 aa)) are disordered. Positions 3–5 (RRK) match the RRK motif; mediates NuRD recruitment to telomeres motif. The segment covering 62–77 (EQSTSPDTSLGSTTPS) has biased composition (polar residues). Residues Lys-176, Lys-216, and Lys-226 each participate in a glycyl lysine isopeptide (Lys-Gly) (interchain with G-Cter in SUMO2) cross-link. 2 disordered regions span residues 259 to 278 (KVSE…ASSF) and 307 to 348 (SSLL…SLEL). A compositionally biased stretch (pro residues) spans 327 to 344 (VTPPPPPPPPPPPPPPPQ). Residues Lys-360 and Lys-372 each participate in a glycyl lysine isopeptide (Lys-Gly) (interchain with G-Cter in SUMO2) cross-link. 3 C2H2-type zinc fingers span residues 374-396 (FQCP…MVIH), 402-424 (HQCP…MKVH), and 433-455 (FQCQ…MRCH). Residues Lys-466, Lys-475, Lys-523, Lys-549, Lys-580, Lys-587, Lys-597, Lys-634, Lys-639, and Lys-658 each participate in a glycyl lysine isopeptide (Lys-Gly) (interchain with G-Cter in SUMO2) cross-link. Residue Lys-673 forms a Glycyl lysine isopeptide (Lys-Gly) (interchain with G-Cter in SUMO1); alternate linkage. Residue Lys-673 forms a Glycyl lysine isopeptide (Lys-Gly) (interchain with G-Cter in SUMO2); alternate linkage. Residues Lys-704, Lys-710, Lys-742, Lys-778, and Lys-798 each participate in a glycyl lysine isopeptide (Lys-Gly) (interchain with G-Cter in SUMO2) cross-link. 2 C2H2-type zinc fingers span residues 817-839 (FPCD…LSLH) and 845-867 (YKCH…LTVH). Residues Lys-870 and Lys-891 each participate in a glycyl lysine isopeptide (Lys-Gly) (interchain with G-Cter in SUMO2) cross-link. 2 consecutive C2H2-type zinc fingers follow at residues 897 to 919 (YSCH…MSLH) and 929 to 952 (ICCT…GTKH). Basic and acidic residues predominate over residues 947 to 960 (HIGTKHTGEDRKTP). A disordered region spans residues 947–996 (HIGTKHTGEDRKTPSESNSPSSSSLSALSDSANSKDDSDGSQKNKGGNNL). Lys-958 is covalently cross-linked (Glycyl lysine isopeptide (Lys-Gly) (interchain with G-Cter in SUMO2)). A compositionally biased stretch (low complexity) spans 961 to 978 (SESNSPSSSSLSALSDSA). Basic and acidic residues predominate over residues 979-988 (NSKDDSDGSQ). Residue Lys-1014 forms a Glycyl lysine isopeptide (Lys-Gly) (interchain with G-Cter in SUMO2) linkage. 2 C2H2-type zinc fingers span residues 1019–1041 (FECV…LQIH) and 1047–1069 (FECD…KKCH).

Belongs to the krueppel C2H2-type zinc-finger protein family. As to quaternary structure, part of a transcription inhibitory ribonucleoprotein complex composed at least of the circular RNA circZNF827, HNRNPK and HNRNPL. Interacts with the nucleosome remodeling and histone deacetylase/NuRD complex. Interacts with RBBP4; the interaction is direct and recruits RBBP4, a component of the NuRD complex, to telomeres.

The protein resides in the nucleus. It localises to the chromosome. It is found in the telomere. Its function is as follows. As part of a ribonucleoprotein complex composed at least of HNRNPK, HNRNPL and the circular RNA circZNF827 that nucleates the complex on chromatin, may negatively regulate the transcription of genes involved in neuronal differentiation. Could also recruit the nucleosome remodeling and histone deacetylase/NuRD complex to telomeric regions of chromosomes to regulate chromatin remodeling as part of telomere maintenance. This chain is Zinc finger protein 827 (ZNF827), found in Homo sapiens (Human).